Reading from the N-terminus, the 239-residue chain is Fatty acid metabolism regulator protein (239 aa).

Positions 6 to 74 (QSPAGFAEEY…HGKPTKVNNF (69 aa)) constitute an HTH gntR-type domain. The segment at residues 34–53 (ERELSELIGVTRTTLREVLQ) is a DNA-binding region (H-T-H motif).

Homodimer.

The protein resides in the cytoplasm. In terms of biological role, multifunctional regulator of fatty acid metabolism. The protein is Fatty acid metabolism regulator protein of Cronobacter sakazakii (strain ATCC BAA-894) (Enterobacter sakazakii).